A 283-amino-acid polypeptide reads, in one-letter code: Alkaline ceramidase (283 aa).

Residues aspartate 28, tryptophan 29, glutamate 31, asparagine 33, and glutamate 42 each contribute to the Ca(2+) site. 2 consecutive transmembrane segments (helical) span residues 43–63 (FVNT…IMLF) and 69–89 (FVTP…LSSM). Zn(2+) is bound at residue histidine 92. 4 consecutive transmembrane segments (helical) span residues 98–118 (IGQL…FSLF), 134–151 (TFSW…GLSW), 154–174 (PIVN…MLYT), and 187–209 (LGIR…RIFC). Residues histidine 221 and histidine 225 each coordinate Zn(2+). The chain crosses the membrane as a helical span at residues 222–242 (GFWHIFIFIAAYTVLVLFAYF).

This sequence belongs to the alkaline ceramidase family. It depends on Zn(2+) as a cofactor. In terms of tissue distribution, expressed in the central midgut of late embryos. In brain, it is present at the interhemispheric junction and in groups of cells in the central brain.

It is found in the membrane. The enzyme catalyses an N-acylsphing-4-enine + H2O = sphing-4-enine + a fatty acid. Hydrolyzes the sphingolipid ceramide into sphingosine and free fatty acid. The sequence is that of Alkaline ceramidase (bwa) from Drosophila melanogaster (Fruit fly).